A 230-amino-acid chain; its full sequence is Spliceosome-associated protein CWC15 homolog (230 aa).

2 disordered regions span residues 1 to 157 (MTTA…EEKQ) and 164 to 183 (AGNPLLNDTPAGSSTSGGDF). Positions 25-34 (KLSNQYSSKD) are enriched in polar residues. Coiled-coil stretches lie at residues 47-82 (GQETEADLRKKDLRRELEDKERNAIREKRARDSASS) and 119-164 (DSDE…NILA). The span at 52-78 (ADLRKKDLRRELEDKERNAIREKRARD) shows a compositional bias: basic and acidic residues. Acidic residues predominate over residues 104–125 (DADEAVDELNSSDDDDSDEDDT). The span at 131–157 (ELEKIKKERAEEKAARDEEIKEKEEKQ) shows a compositional bias: basic and acidic residues.

It belongs to the CWC15 family. Component of spliceosomal complex.

It localises to the nucleus. Component of a spliceosomal complex that is required for activating pre-mRNA splicing. This is Spliceosome-associated protein CWC15 homolog from Caenorhabditis elegans.